Consider the following 192-residue polypeptide: Cytidylate kinase (192 aa).

An ATP-binding site is contributed by 7-15; it reads GPPGAGKST.

This sequence belongs to the cytidylate kinase family. Type 2 subfamily.

The protein resides in the cytoplasm. The catalysed reaction is CMP + ATP = CDP + ADP. It catalyses the reaction dCMP + ATP = dCDP + ADP. The sequence is that of Cytidylate kinase from Haloquadratum walsbyi (strain DSM 16790 / HBSQ001).